Here is a 357-residue protein sequence, read N- to C-terminus: Aspartate-semialdehyde dehydrogenase (357 aa).

Threonine 12, glycine 13, threonine 14, valine 15, serine 37, serine 40, leucine 84, and aspartate 85 together coordinate NADP(+). Cysteine 151 functions as the Acyl-thioester intermediate in the catalytic mechanism. Glycine 183 contacts NADP(+). Histidine 247 (proton acceptor) is an active-site residue. A Phosphoserine modification is found at serine 323. Asparagine 335 contributes to the NADP(+) binding site.

This sequence belongs to the aspartate-semialdehyde dehydrogenase family.

It localises to the cytoplasm. The protein localises to the cytosol. Its subcellular location is the nucleus. It catalyses the reaction L-aspartate 4-semialdehyde + phosphate + NADP(+) = 4-phospho-L-aspartate + NADPH + H(+). It participates in amino-acid biosynthesis; L-methionine biosynthesis via de novo pathway; L-homoserine from L-aspartate: step 2/3. Its pathway is amino-acid biosynthesis; L-threonine biosynthesis; L-threonine from L-aspartate: step 2/5. Catalyzes the NADPH-dependent formation of L-aspartate 4-semialdehyde (L-ASA) by the reductive dephosphorylation of 4-phospho-L-aspartate. Mediates the second step in the biosynthesis of amino acids that derive from aspartate (the aspartate family of amino acids), including methioinine and threonine, the latter of which is a precursor to isoleucine. In Schizosaccharomyces pombe (strain 972 / ATCC 24843) (Fission yeast), this protein is Aspartate-semialdehyde dehydrogenase.